A 372-amino-acid chain; its full sequence is Cytochrome b (372 aa).

4 helical membrane-spanning segments follow: residues 25–45 (FGSM…FLAI), 69–90 (WIMQ…YTHI), 105–125 (WLSG…GYVL), and 170–190 (FFAL…IHIM). Heme b is bound by residues His-75 and His-89. Heme b is bound by residues His-174 and His-188. An a ubiquinone-binding site is contributed by His-193. 4 helical membrane-spanning segments follow: residues 218–238 (YKDM…MSFM), 280–300 (LGGT…PFTH), 312–332 (ITQV…WTAT), and 339–358 (FILI…IIHP).

It belongs to the cytochrome b family. The cytochrome bc1 complex contains 3 respiratory subunits (MT-CYB, CYC1 and UQCRFS1), 2 core proteins (UQCRC1 and UQCRC2) and probably 6 low-molecular weight proteins. Heme b serves as cofactor.

The protein resides in the mitochondrion inner membrane. Component of the ubiquinol-cytochrome c reductase complex (complex III or cytochrome b-c1 complex) that is part of the mitochondrial respiratory chain. The b-c1 complex mediates electron transfer from ubiquinol to cytochrome c. Contributes to the generation of a proton gradient across the mitochondrial membrane that is then used for ATP synthesis. This chain is Cytochrome b (MT-CYB), found in Pseudechis australis (Mulga snake).